The sequence spans 553 residues: Glucagon-like peptide 2 receptor (553 aa).

Residues Met1–Ala173 are Extracellular-facing. 3 disulfide bridges follow: Cys83/Cys105, Cys96/Cys137, and Cys118/Cys159. N-linked (GlcNAc...) asparagine glycans are attached at residues Asn97, Asn113, Asn148, and Asn162. Residues Leu174–Thr198 form a helical membrane-spanning segment. Topologically, residues Leu199–Arg210 are cytoplasmic. Residues Asn211 to Phe235 form a helical membrane-spanning segment. Residues Tyr236–Arg261 are Extracellular-facing. A helical membrane pass occupies residues Ser262–Leu285. The Cytoplasmic portion of the chain corresponds to His286–Leu299. Residues Trp300–Ala321 traverse the membrane as a helical segment. At Arg322–Ile339 the chain is on the extracellular side. Residues Trp340 to Leu362 form a helical membrane-spanning segment. At Lys363–Ser386 the chain is on the cytoplasmic side. A helical transmembrane segment spans residues Thr387–Thr405. Residues Asp406 to Arg417 are Extracellular-facing. A helical transmembrane segment spans residues Leu418–Phe438. The Cytoplasmic portion of the chain corresponds to Ala439–Glu550.

Belongs to the G-protein coupled receptor 2 family.

The protein resides in the cell membrane. Its function is as follows. This is a receptor for glucagon-like peptide 2. The activity of this receptor is mediated by G proteins which activate adenylyl cyclase. This chain is Glucagon-like peptide 2 receptor (GLP2R), found in Homo sapiens (Human).